A 456-amino-acid polypeptide reads, in one-letter code: Antigen Lp49 (456 aa).

An N-terminal signal peptide occupies residues 1-34; it reads MNSNPKKKFLKLIKIKSDIILLIPIFLFLVCCKS. An intrachain disulfide couples cysteine 346 to cysteine 347.

The protein resides in the cell outer membrane. May be involved in virulence. Binds human plasminogen (PLG) and stimulates its proteolytic cleavage to enzymatically active plasmin in the presence of an urokinase-type PLG activator in vitro. Activated plasmin has proteolytic activity which may help the bacteria to spread throughout the host by degrading extracellular matrix components, facilitating tissue penetration and invasion. The chain is Antigen Lp49 from Leptospira interrogans serogroup Icterohaemorrhagiae serovar copenhageni (strain Fiocruz L1-130).